A 593-amino-acid chain; its full sequence is High affinity cGMP-specific 3',5'-cyclic phosphodiesterase 9A (593 aa).

The disordered stretch occupies residues 87-141; that stretch reads SAGVEDKRTTSRGQSAERPLRDRRVVGLEQPRREGAFESGQVEPRPREPQGCYQE. The segment covering 104–122 has biased composition (basic and acidic residues); it reads RPLRDRRVVGLEQPRREGA. A PDEase domain is found at 236–557; sequence PRRDVPTYPK…DRYEELKRID (322 aa). Catalysis depends on His312, which acts as the Proton donor. Residue 312–316 participates in 3',5'-cyclic GMP binding; the sequence is HNFRH. Positions 316, 352, and 353 each coordinate Zn(2+). Residue Asp353 coordinates 3',5'-cyclic GMP. Mg(2+) is bound at residue Asp353. A Phosphoserine modification is found at Ser379. 3',5'-cyclic GMP-binding positions include Asp462, Tyr484, and 512-513; that span reads AQ. Position 462 (Asp462) interacts with Zn(2+). The disordered stretch occupies residues 564 to 593; the sequence is QKKTDSLTSGATEKSRERSRDVKNSEGDCA. Positions 576–593 are enriched in basic and acidic residues; the sequence is EKSRERSRDVKNSEGDCA.

It belongs to the cyclic nucleotide phosphodiesterase family. PDE9 subfamily. As to quaternary structure, homodimer. Requires Zn(2+) as cofactor. It depends on Mg(2+) as a cofactor. In terms of tissue distribution, expressed in all tissues examined (testis, brain, small intestine, skeletal muscle, heart, lung, thymus, spleen, placenta, kidney, liver, pancreas, ovary and prostate) except blood. Highest levels in brain, heart, kidney, spleen, prostate and colon. Isoform PDE9A12 is found in prostate. In brain, present in the cortex, cerebellum, and subiculum (at protein level). In heart, primarily localizes to myocytes.

It localises to the cell projection. It is found in the ruffle membrane. The protein localises to the cytoplasm. The protein resides in the perinuclear region. Its subcellular location is the golgi apparatus. It localises to the endoplasmic reticulum. It is found in the cell membrane. The protein localises to the sarcolemma. The catalysed reaction is 3',5'-cyclic GMP + H2O = GMP + H(+). The protein operates within purine metabolism; 3',5'-cyclic GMP degradation; GMP from 3',5'-cyclic GMP: step 1/1. Its activity is regulated as follows. Inhibited by zaprinast; inhibitor is however not specific to PDE9A. Specifically inhibited by BAY-73-6691 (1-(2-chlorophenyl)-6-((2R)-3,3,3- trifluoro-2-methylpropyl)-1,5-dihydro-4H-pyrazolo(3,4-d)pyrimidine-4-one). BAY-73-9961 has two enantiomers, (R) and (S), due to the presence of a chiral center, and both forms vary in their pattern of interaction. Specifically inhibited by PF-4181366 (4H-Pyrazolo[3,4-d]pyrimidin-4-one, 1- cyclopentyl-1,5-dihydro-6-[(3S,4S)-4-methyl- 1-(6-quinoxalinylmethyl)-3-pyrrolidinyl]-one). Specifically inhibited by PF-4449613 ((R)-6-(1-(3-phenoxyazetidin-1-yl)ethyl)-1-(tetrahydro-2H-pyran-4-yl)-1H-pyrazolo[3,4-d]pyrimidin- 4(5H)-one). Specifically inhibited by inhibitor 28 (2-((1-(2-Chlorophenyl)-4-hydroxy-1Hpyrazolo[ 3,4-d]pyrimidin-6-yl)amino)-N-(4- methoxyphenyl)propanamide): inhibitor forms a hydrogen bond with Tyr-484 and Gln-513. Specifically inhibited by 1-Cyclopentyl-6-[(1r)-1-(3-phenoxyazetidin- 1-Yl)ethyl]-1,5-dihydro-4h-pyrazolo[3,4-D] pyrimidin-4-one: inhibitor forms a hydrogen bond with Tyr-484 and Gln-513. Its function is as follows. Specifically hydrolyzes the second messenger cGMP, which is a key regulator of many important physiological processes. Highly specific: compared to other members of the cyclic nucleotide phosphodiesterase family, has the highest affinity and selectivity for cGMP. Specifically regulates natriuretic-peptide-dependent cGMP signaling in heart, acting as a regulator of cardiac hypertrophy in myocytes and muscle. Does not regulate nitric oxide-dependent cGMP in heart. Additional experiments are required to confirm whether its ability to hydrolyze natriuretic-peptide-dependent cGMP is specific to heart or is a general feature of the protein. In brain, involved in cognitive function, such as learning and long-term memory. The sequence is that of High affinity cGMP-specific 3',5'-cyclic phosphodiesterase 9A from Homo sapiens (Human).